Consider the following 87-residue polypeptide: Beta-defensin 109C (87 aa).

The N-terminal stretch at 1-22 (MRLHLLLLILLLFSILLSPVRG) is a signal peptide. Intrachain disulfides connect cysteine 31/cysteine 59, cysteine 38/cysteine 53, and cysteine 43/cysteine 60.

This sequence belongs to the beta-defensin family.

Its subcellular location is the secreted. Functionally, has antibacterial activity. This Homo sapiens (Human) protein is Beta-defensin 109C (DEFB109C).